Consider the following 171-residue polypeptide: Putative rhomboid protein L523 (171 aa).

Helical transmembrane passes span Y3–F23, F67–T87, V94–L114, and G119–S139. The Nucleophile role is filled by S100. Residue H143 is part of the active site. A helical transmembrane segment spans residues I144–V164.

This sequence belongs to the peptidase S54 family.

The protein resides in the membrane. Functionally, probable serine protease. In Acanthamoeba polyphaga mimivirus (APMV), this protein is Putative rhomboid protein L523.